Here is a 622-residue protein sequence, read N- to C-terminus: Chaperone protein HscA homolog (622 aa).

Belongs to the heat shock protein 70 family.

Functionally, chaperone involved in the maturation of iron-sulfur cluster-containing proteins. Has a low intrinsic ATPase activity which is markedly stimulated by HscB. The polypeptide is Chaperone protein HscA homolog (Methylobacillus flagellatus (strain ATCC 51484 / DSM 6875 / VKM B-1610 / KT)).